Reading from the N-terminus, the 309-residue chain is UPF0276 protein RB0508 (309 aa).

This sequence belongs to the UPF0276 family.

The protein is UPF0276 protein RB0508 of Rhizobium meliloti (strain 1021) (Ensifer meliloti).